The following is a 119-amino-acid chain: Large ribosomal subunit protein uL18 (119 aa).

The protein belongs to the universal ribosomal protein uL18 family. As to quaternary structure, part of the 50S ribosomal subunit; part of the 5S rRNA/L5/L18/L25 subcomplex. Contacts the 5S and 23S rRNAs.

Functionally, this is one of the proteins that bind and probably mediate the attachment of the 5S RNA into the large ribosomal subunit, where it forms part of the central protuberance. The chain is Large ribosomal subunit protein uL18 from Chelativorans sp. (strain BNC1).